Consider the following 80-residue polypeptide: U19-lycotoxin-Ls1a (80 aa).

Positions M1–A22 are cleaved as a signal peptide. Residues Q23 to R34 constitute a propeptide that is removed on maturation. 4 disulfide bridges follow: C36-C50, C43-C55, C49-C66, and C57-C64.

The protein belongs to the neurotoxin 02 (plectoxin) family. 05 (U19-lycotoxin) subfamily. In terms of tissue distribution, expressed by the venom gland.

It is found in the secreted. This Lycosa singoriensis (Wolf spider) protein is U19-lycotoxin-Ls1a.